The sequence spans 320 residues: Ribosome biogenesis protein BRX1 homolog 2 (320 aa).

The interval 1–40 (MGRKRKHSETEAPAPVKKSDEPAPDRPKRTLLGWKDKSEG) is disordered. Over residues 17-40 (KKSDEPAPDRPKRTLLGWKDKSEG) the composition is skewed to basic and acidic residues. The Brix domain occupies 57–260 (EKVLVTCSRR…PIKIFAGSFG (204 aa)). Residues 297–320 (RKKMHELSNPLEPDEFADMWKDDE) are disordered. Positions 308–320 (EPDEFADMWKDDE) are enriched in acidic residues.

The protein belongs to the BRX1 family. Expressed in roots, rosette leaves, stems, flowers, siliques and seeds.

Its subcellular location is the nucleus. It is found in the nucleolus. Involved in pre-rRNA processing and required for biogenesis of the large (60S) ribosomal subunit. Required for proper development. The polypeptide is Ribosome biogenesis protein BRX1 homolog 2 (Arabidopsis thaliana (Mouse-ear cress)).